A 480-amino-acid polypeptide reads, in one-letter code: NADH-quinone oxidoreductase subunit N (480 aa).

14 consecutive transmembrane segments (helical) span residues 12-32 (LLIPELVLAGGAMALLMLGVF), 41-61 (LVQWLTVGLLAAAALAALFLV), 80-100 (FSKTAIGLVAAIAMLLAMPYL), 105-125 (LGKIEYPVLVVLAVTGMMMMV), 130-150 (LIAMYMGIELQSLALYVLAAF), 165-185 (FVLGALSSGLLLYGASLVYGF), 204-224 (IGLTVGLVFVICGLAFKVSAA), 237-257 (APTPVTAFFATAPKFAAIVLL), 275-295 (VIWMIAVLSMAVGAFGALTQQ), 300-320 (LMAYSSISNMGYALVAVAAAS), 326-346 (ALLVFMVLYMVGAIGSFATIL), 372-392 (GWSMTALMFSIGGLPFMVGFF), 406-428 (LMILAVLAVLFSVVGAAYYLRIV), and 450-470 (IARIAGLATVLLLPVLGWLVF).

It belongs to the complex I subunit 2 family. As to quaternary structure, NDH-1 is composed of 14 different subunits. Subunits NuoA, H, J, K, L, M, N constitute the membrane sector of the complex.

Its subcellular location is the cell inner membrane. It carries out the reaction a quinone + NADH + 5 H(+)(in) = a quinol + NAD(+) + 4 H(+)(out). Its function is as follows. NDH-1 shuttles electrons from NADH, via FMN and iron-sulfur (Fe-S) centers, to quinones in the respiratory chain. The immediate electron acceptor for the enzyme in this species is believed to be ubiquinone. Couples the redox reaction to proton translocation (for every two electrons transferred, four hydrogen ions are translocated across the cytoplasmic membrane), and thus conserves the redox energy in a proton gradient. The polypeptide is NADH-quinone oxidoreductase subunit N (Maricaulis maris (strain MCS10) (Caulobacter maris)).